The primary structure comprises 252 residues: Imidazole glycerol phosphate synthase subunit HisF (252 aa).

Active-site residues include aspartate 11 and aspartate 130.

It belongs to the HisA/HisF family. As to quaternary structure, heterodimer of HisH and HisF.

It is found in the cytoplasm. It catalyses the reaction 5-[(5-phospho-1-deoxy-D-ribulos-1-ylimino)methylamino]-1-(5-phospho-beta-D-ribosyl)imidazole-4-carboxamide + L-glutamine = D-erythro-1-(imidazol-4-yl)glycerol 3-phosphate + 5-amino-1-(5-phospho-beta-D-ribosyl)imidazole-4-carboxamide + L-glutamate + H(+). It participates in amino-acid biosynthesis; L-histidine biosynthesis; L-histidine from 5-phospho-alpha-D-ribose 1-diphosphate: step 5/9. Its function is as follows. IGPS catalyzes the conversion of PRFAR and glutamine to IGP, AICAR and glutamate. The HisF subunit catalyzes the cyclization activity that produces IGP and AICAR from PRFAR using the ammonia provided by the HisH subunit. This is Imidazole glycerol phosphate synthase subunit HisF from Streptococcus sanguinis (strain SK36).